A 360-amino-acid polypeptide reads, in one-letter code: CCA-adding enzyme (360 aa).

Positions 8 and 11 each coordinate ATP. CTP is bound by residues G8 and R11. Residues D21 and D23 each contribute to the Mg(2+) site. ATP is bound by residues R91, R137, and R140. CTP contacts are provided by R91, R137, and R140.

It belongs to the tRNA nucleotidyltransferase/poly(A) polymerase family. Bacterial CCA-adding enzyme type 2 subfamily. The cofactor is Mg(2+).

It carries out the reaction a tRNA precursor + 2 CTP + ATP = a tRNA with a 3' CCA end + 3 diphosphate. The catalysed reaction is a tRNA with a 3' CCA end + 2 CTP + ATP = a tRNA with a 3' CCACCA end + 3 diphosphate. Functionally, catalyzes the addition and repair of the essential 3'-terminal CCA sequence in tRNAs without using a nucleic acid template. Adds these three nucleotides in the order of C, C, and A to the tRNA nucleotide-73, using CTP and ATP as substrates and producing inorganic pyrophosphate. tRNA 3'-terminal CCA addition is required both for tRNA processing and repair. Also involved in tRNA surveillance by mediating tandem CCA addition to generate a CCACCA at the 3' terminus of unstable tRNAs. While stable tRNAs receive only 3'-terminal CCA, unstable tRNAs are marked with CCACCA and rapidly degraded. The polypeptide is CCA-adding enzyme (Francisella tularensis subsp. tularensis (strain FSC 198)).